Consider the following 601-residue polypeptide: AT-rich interactive domain-containing protein 3A (601 aa).

Residues 1–224 (MKLQAVMETL…HMASQMPPPD (224 aa)) form a disordered region. Positions 60 to 89 (MAALAAMRAAAAGLGHPSSPGGSEDGPPIS) are enriched in low complexity. A phosphoserine mark is found at Ser-78, Ser-82, and Ser-89. Thr-99 is modified (phosphothreonine). Ser-102 bears the Phosphoserine mark. Positions 114–123 (GHAEGDRHLM) are enriched in basic and acidic residues. Ser-127 is modified (phosphoserine). The tract at residues 128-165 (DDDDTKSKWEEQELEELGEEEEEEEEEDDFEEEEEEEE) is acidic. Residues 139–166 (QELEELGEEEEEEEEEDDFEEEEEEEEG) are compositionally biased toward acidic residues. Residues 243-335 (DPKRKEFLDD…YLYPYECERR (93 aa)) form the ARID domain. 2 positions are modified to phosphoserine: Ser-358 and Ser-367. Residues Lys-403, Lys-404, Lys-457, and Lys-467 each participate in a glycyl lysine isopeptide (Lys-Gly) (interchain with G-Cter in SUMO2) cross-link. Positions 449–546 (AALEQLREKL…GVLFAQPPPP (98 aa)) constitute an REKLES domain. Positions 450–493 (ALEQLREKLESTEPPEKKMALVADEQQRLMQRAVQQSFLAMTAQ) are important for nuclear localization. The segment at 495-518 (PMNIRINSQASESRQDSAVSLTSA) is homodimerization. An important for cytoplasmic localization region spans residues 542–562 (QPPPPTAPSAPGKGGVSSIGT). The disordered stretch occupies residues 545–601 (PPTAPSAPGKGGVSSIGTNTTTGSRTGASGSTVSGGQVGLPGVSTPTMSSTSNNSLP). Low complexity-rich tracts occupy residues 559–579 (SIGTNTTTGSRTGASGSTVSG) and 588–601 (STPTMSSTSNNSLP).

In terms of assembly, homodimer. Heterodimer with ARID3B. Interacts with E2F1. Interacts with GTF2I and BTK. As to expression, B-cell specific in the adult. Expressed in B-cell progenitors, down-regulated in the immature B-cell stage, and is up-regulated again at later stages of B-lymphocyte differentiation.

Its subcellular location is the nucleus. The protein resides in the cytoplasm. Its function is as follows. Transcription factor involved in B-cell differentiation. Binds a VH promoter proximal site necessary for induced mu-heavy-chain transcription. Binds the minor groove of a restricted ATC sequence that is sufficient for nuclear matrix association. This sequence motif is present in matrix-associating regions (MARS) proximal to the promoter and flanking E mu. Activates E mu-driven transcription by binding these sites. May be involved in the control of cell cycle progression by the RB1/E2F1 pathway. The protein is AT-rich interactive domain-containing protein 3A (Arid3a) of Mus musculus (Mouse).